Reading from the N-terminus, the 648-residue chain is DNA helicase/primase complex-associated protein (648 aa).

The disordered stretch occupies residues 43 to 63 (LWPSDQNNTASPAGAKTDQPT).

The protein belongs to the herpesviridae HEPA family. In terms of assembly, associates with the primase and the helicase to form the helicase-primase complex. Interacts with the origin-binding protein. Interacts with the polymerase catalytic subunit.

The protein localises to the host nucleus. Functionally, component of the helicase/primase complex. Unwinds the DNA at the replication forks and generates single-stranded DNA for both leading and lagging strand synthesis. The primase synthesizes short RNA primers on the lagging strand that the polymerase presumably elongates using dNTPs. The primase-associated factor has no known catalytic activity in the complex and may serve to facilitate the formation of the replisome by directly interacting with the origin-binding protein and the polymerase. This chain is DNA helicase/primase complex-associated protein (UL8), found in Amazona oratrix (yellow-headed parrot).